We begin with the raw amino-acid sequence, 339 residues long: Serpentine receptor class alpha-22 (339 aa).

6 helical membrane-spanning segments follow: residues 33-53 (IFIS…IQAL), 110-130 (VVDL…VFSL), 150-170 (FIAI…FYIA), 199-219 (VRTM…YLSV), 250-270 (IFII…NLLL), and 284-304 (IALF…VIYF).

Belongs to the nematode receptor-like protein sra family.

It is found in the membrane. This is Serpentine receptor class alpha-22 (sra-22) from Caenorhabditis elegans.